Consider the following 252-residue polypeptide: MDERDALRISREIAGEVRKAIASMPLRERVKDVGMGKDGTPTKAADRVAEDAALEILRKERVTVVTEESGVLGEGDVFVALDPLDGTFNATRGIPVYSVSLCFSYSDKLKDAFFGYVYNLATGDEYYADSSGAYRNGERIEVSDAEELYCNAIIYYPDRKFPFKRMRIFGSAATELCFFADGSFDCFLDIRPGKMLRIYDAAAGVFIAEKAGGKVTELDGESLGNKKFDMQERLNIVAANEKLHPKLLELIK.

Mg(2+) contacts are provided by Asp-38, Thr-40, Glu-67, Asp-82, Leu-84, and Asp-85. Substrate-binding positions include 85–87, Arg-167, Ala-172, and Arg-191; that span reads DGT. Position 200 (Asp-200) interacts with Mg(2+).

This sequence belongs to the inositol monophosphatase superfamily. FBPase class 4 family. Homodimer. Mg(2+) serves as cofactor. Mn(2+) is required as a cofactor.

It carries out the reaction beta-D-fructose 1,6-bisphosphate + H2O = beta-D-fructose 6-phosphate + phosphate. It catalyses the reaction a myo-inositol phosphate + H2O = myo-inositol + phosphate. With respect to regulation, both FBPase and IMPase activities are inhibited by Ca(2+). In contrast to mammalian I-1-P phosphatases, is only very weakly inhibited by Li(+) (with an IC(50) of about 290 mM). Phosphatase with broad specificity; it can dephosphorylate fructose 1,6-bisphosphate, both D and L isomers of inositol-1-phosphate (I-1-P), 2'-AMP, pNPP, inositol-2-phosphate, beta-glycerol phosphate, and alpha-D-glucose-1-phosphate. Cannot hydrolyze glucose-6-phosphate and fructose-6-phosphate. May be involved in the biosynthesis of a unique osmolyte, di-myo-inositol 1,1-phosphate. The chain is Fructose-1,6-bisphosphatase/inositol-1-monophosphatase (suhB) from Archaeoglobus fulgidus (strain ATCC 49558 / DSM 4304 / JCM 9628 / NBRC 100126 / VC-16).